A 77-amino-acid chain; its full sequence is MARVCEVTGKKPMVGNNVSHANNKTKRRFLPNLQYRRFWVESENRWVRLRVSSAALRLIDKNGIDSVLADLRARGQA.

The protein belongs to the bacterial ribosomal protein bL28 family.

This chain is Large ribosomal subunit protein bL28, found in Delftia acidovorans (strain DSM 14801 / SPH-1).